Reading from the N-terminus, the 499-residue chain is MGGEDEILSTMEDFAAVYDVLVIGCGPGGFTAAMQASQAGLLTACVDQRASLGGAYLVDGAVPSKTLLYESYLYRLLQQQELIEQRGTRLFPAKFDMQAAQSALKHNIEELGNVYKRELSKNNVTVYKGTAAFKDPHHVEIAQRGMKPFIVEAKYIVVATGSAVIQCPGVAIDNDKIISSDKALSLDYIPSRFTIMGGGTIGLEIACIFNNLGSRVTIVESQSEICQNMDNELASATKTLLQCQGIAFLLDTRVQLAEADAAGQLNITLLNKVSKKTYVHHCDVLMVSIGRRPLLKGLDISSIGLDERDFVENVDVQTQSLLKYPHIKPIGDVTLGPMLALKAEEQAIRAIQSIGCTGSDGTSNCGFPPNVLYCQPQIGWVGYTEEGLAKARIPYQKGRVLFSQNVRYNTLLPREENTTVSPFIKVLIDSRDMKILGVHMINDDANELLSQASMAVSLGLTAHDVCKVPFPHPSLSESFKQAVQLAMANGTSPGVHVRE.

47–56 (DQRASLGGAY) serves as a coordination point for FAD.

Belongs to the class-I pyridine nucleotide-disulfide oxidoreductase family.

The protein localises to the cytoplasm. This Saccharomyces cerevisiae (strain ATCC 204508 / S288c) (Baker's yeast) protein is Increased recombination centers protein 15 (IRC15).